Reading from the N-terminus, the 395-residue chain is S-adenosylmethionine synthase 2 (395 aa).

Residue E9 coordinates Mg(2+). ATP is bound at residue H15. Residue E43 coordinates K(+). The L-methionine site is built by E56 and Q99. Residues 167–169 (DGK), 235–238 (SGRF), D246, 252–253 (RK), A269, K273, and K277 contribute to the ATP site. D246 provides a ligand contact to L-methionine. K277 lines the L-methionine pocket.

It belongs to the AdoMet synthase family. As to quaternary structure, homotetramer. It depends on Mn(2+) as a cofactor. Requires Mg(2+) as cofactor. Co(2+) serves as cofactor. K(+) is required as a cofactor.

The protein localises to the cytoplasm. The enzyme catalyses L-methionine + ATP + H2O = S-adenosyl-L-methionine + phosphate + diphosphate. The protein operates within amino-acid biosynthesis; S-adenosyl-L-methionine biosynthesis; S-adenosyl-L-methionine from L-methionine: step 1/1. Catalyzes the formation of S-adenosylmethionine from methionine and ATP. The reaction comprises two steps that are both catalyzed by the same enzyme: formation of S-adenosylmethionine (AdoMet) and triphosphate, and subsequent hydrolysis of the triphosphate. The protein is S-adenosylmethionine synthase 2 (METK2) of Suaeda salsa (Seepweed).